Reading from the N-terminus, the 331-residue chain is Vitamin B12 import system permease protein BtuC (331 aa).

9 helical membrane passes run 18–38 (WLFG…CAGE), 64–84 (LAVL…QALF), 91–111 (PGLL…VLLG), 114–134 (VLPG…ITFI), 149–169 (LLAG…AVYF), 194–214 (LWLM…SQPL), 243–263 (GWMV…GLVI), 277–297 (VLLP…DIIA), and 305–325 (ELPI…WLLL).

This sequence belongs to the binding-protein-dependent transport system permease family. FecCD subfamily. The complex is composed of two ATP-binding proteins (BtuD), two transmembrane proteins (BtuC) and a solute-binding protein (BtuF).

It is found in the cell inner membrane. In terms of biological role, part of the ABC transporter complex BtuCDF involved in vitamin B12 import. Involved in the translocation of the substrate across the membrane. The chain is Vitamin B12 import system permease protein BtuC from Klebsiella pneumoniae subsp. pneumoniae (strain ATCC 700721 / MGH 78578).